Consider the following 143-residue polypeptide: SsrA-binding protein (143 aa).

The protein belongs to the SmpB family.

It is found in the cytoplasm. Its function is as follows. Required for rescue of stalled ribosomes mediated by trans-translation. Binds to transfer-messenger RNA (tmRNA), required for stable association of tmRNA with ribosomes. tmRNA and SmpB together mimic tRNA shape, replacing the anticodon stem-loop with SmpB. tmRNA is encoded by the ssrA gene; the 2 termini fold to resemble tRNA(Ala) and it encodes a 'tag peptide', a short internal open reading frame. During trans-translation Ala-aminoacylated tmRNA acts like a tRNA, entering the A-site of stalled ribosomes, displacing the stalled mRNA. The ribosome then switches to translate the ORF on the tmRNA; the nascent peptide is terminated with the 'tag peptide' encoded by the tmRNA and targeted for degradation. The ribosome is freed to recommence translation, which seems to be the essential function of trans-translation. The protein is SsrA-binding protein of Mycoplasmoides gallisepticum (strain R(low / passage 15 / clone 2)) (Mycoplasma gallisepticum).